The primary structure comprises 263 residues: Hydroxyacylglutathione hydrolase (263 aa).

Residues His56, His58, Asp60, His61, His115, Asp135, and His175 each coordinate Zn(2+).

This sequence belongs to the metallo-beta-lactamase superfamily. Glyoxalase II family. As to quaternary structure, monomer. The cofactor is Zn(2+).

The enzyme catalyses an S-(2-hydroxyacyl)glutathione + H2O = a 2-hydroxy carboxylate + glutathione + H(+). It functions in the pathway secondary metabolite metabolism; methylglyoxal degradation; (R)-lactate from methylglyoxal: step 2/2. Functionally, thiolesterase that catalyzes the hydrolysis of S-D-lactoyl-glutathione to form glutathione and D-lactic acid. This Polaromonas sp. (strain JS666 / ATCC BAA-500) protein is Hydroxyacylglutathione hydrolase.